Here is a 410-residue protein sequence, read N- to C-terminus: LL-diaminopimelate aminotransferase (410 aa).

Substrate contacts are provided by Y15 and G42. Pyridoxal 5'-phosphate contacts are provided by residues Y72, 108–109, Y132, N188, Y219, and 247–249; these read AK and SFS. 3 residues coordinate substrate: K109, Y132, and N188. K250 is modified (N6-(pyridoxal phosphate)lysine). Pyridoxal 5'-phosphate-binding residues include R258 and N293. Residues N293 and R389 each coordinate substrate.

Belongs to the class-I pyridoxal-phosphate-dependent aminotransferase family. LL-diaminopimelate aminotransferase subfamily. As to quaternary structure, homodimer. The cofactor is pyridoxal 5'-phosphate.

The enzyme catalyses (2S,6S)-2,6-diaminopimelate + 2-oxoglutarate = (S)-2,3,4,5-tetrahydrodipicolinate + L-glutamate + H2O + H(+). It functions in the pathway amino-acid biosynthesis; L-lysine biosynthesis via DAP pathway; LL-2,6-diaminopimelate from (S)-tetrahydrodipicolinate (aminotransferase route): step 1/1. Its function is as follows. Involved in the synthesis of meso-diaminopimelate (m-DAP or DL-DAP), required for both lysine and peptidoglycan biosynthesis. Catalyzes the direct conversion of tetrahydrodipicolinate to LL-diaminopimelate. The polypeptide is LL-diaminopimelate aminotransferase (Bacteroides fragilis (strain YCH46)).